Consider the following 183-residue polypeptide: Putative 3-methyladenine DNA glycosylase (183 aa).

It belongs to the DNA glycosylase MPG family.

In Rickettsia africae (strain ESF-5), this protein is Putative 3-methyladenine DNA glycosylase.